Here is a 2542-residue protein sequence, read N- to C-terminus: Highly reducing polyketide synthase (2542 aa).

In terms of domain architecture, Ketosynthase family 3 (KS3) spans 7–435 (PEPIAIVGMA…GANAHAILDA (429 aa)). Active-site for beta-ketoacyl synthase activity residues include Cys182, His317, and His357. One can recognise a Malonyl-CoA:ACP transacylase (MAT) domain in the interval 545 to 872 (FVFTGQGAQW…NLVGSLFLSG (328 aa)). The tract at residues 927–1062 (HDLLGSRIPG…TTNETLRINS (136 aa)) is N-terminal hotdog fold. Residues 927–1224 (HDLLGSRIPG…FLSLETATKE (298 aa)) form the PKS/mFAS DH domain. The active-site Proton acceptor; for dehydratase activity is the His959. Residues 1072–1224 (NKDSYVRRWY…FLSLETATKE (153 aa)) are C-terminal hotdog fold. Asp1137 (proton donor; for dehydratase activity) is an active-site residue. The segment at 1275–1574 (LTQLAIRSVV…AGADIMLDDY (300 aa)) is methyltransferase (CMet) domain. Residues 1606 to 1634 (VNGTNGINSTNSVNVTNDTSGINDTNRMN) form a disordered region. The region spanning 1866 to 2186 (GKANSFYFES…QGDSVGSVVL (321 aa)) is the Enoyl reductase (ER) domain. A Ketoreductase (KR) domain is found at 2209–2389 (ASYLLVGCLG…QAMSMALGMI (181 aa)).

Pantetheine 4'-phosphate serves as cofactor.

The protein operates within antifungal biosynthesis. Functionally, highly reducing polyketide synthase; part of the gene cluster that mediates the biosynthesis of the tetrahydropyranyl antifungal agent lanomycin that acts as an inhibitor of CYP51 and blocks the ergosterol biosynthesis. The biosynthesis probably begins with the formation of an hexaketide, followed by methionine mediated alkylation of C-2 and C-6, and methylation of the reduced C-3 oxygen, pyran forming reductive ring closure, oxygenation of C-4, beta-keto reduction, enoyl reduction and dehydration of the remaining oxygens, and finally, acylation with glycine to complete the biosynthesis. The protein is Highly reducing polyketide synthase of Pyrenophora dematioidea (Helminthosporium dematioideum).